Consider the following 286-residue polypeptide: Flagellar filament 31.3 kDa core protein (286 aa).

The protein belongs to the bacterial flagellin family. As to quaternary structure, the core of the flagellum consists of several antigenically related polypeptides. In terms of processing, glycosylated. Glycosylation is not essential for motility.

It localises to the periplasmic flagellum. It is found in the periplasm. Its function is as follows. Component of the core of the flagella. This Treponema maltophilum protein is Flagellar filament 31.3 kDa core protein (flaB2).